Here is a 113-residue protein sequence, read N- to C-terminus: Replication initiation control protein YabA (113 aa).

His88, Cys90, Cys104, and Cys107 together coordinate Zn(2+).

The protein belongs to the YabA family. As to quaternary structure, homotetramer. Interacts with both DnaA and DnaN, acting as a bridge between these two proteins. It depends on Zn(2+) as a cofactor.

The protein resides in the cytoplasm. It is found in the nucleoid. Functionally, involved in control of chromosome replication initiation. Inhibits the cooperative binding of DnaA to the oriC region, thus negatively regulating initiation of chromosome replication. Inhibits the ability of DnaA-ATP to form a helix on DNA; does not disassemble preformed DnaA-DNA helices. Decreases the residence time of DnaA on the chromosome at its binding sites (oriC, replication forks and promoter-binding sites). Tethers DnaA to the replication machinery via the DNA polymerase beta sliding clamp subunit (dnaN). Associates with oriC and other DnaA targets on the chromosome in a DnaA-dependent manner. The protein is Replication initiation control protein YabA of Staphylococcus saprophyticus subsp. saprophyticus (strain ATCC 15305 / DSM 20229 / NCIMB 8711 / NCTC 7292 / S-41).